The sequence spans 168 residues: uncharacterized protein (168 aa).

The span at 1–15 shows a compositional bias: basic and acidic residues; sequence MKEASDREEAPKMVE. Residues 1-36 form a disordered region; sequence MKEASDREEAPKMVEKNYSTGFRKAHGEKDQSVTKP.

It localises to the cytoplasm. This is an uncharacterized protein from Saccharomyces cerevisiae (strain ATCC 204508 / S288c) (Baker's yeast).